Consider the following 384-residue polypeptide: Chorismate synthase (384 aa).

Arg-40 and Arg-46 together coordinate NADP(+). FMN is bound by residues 128–130, Gly-292, 307–311, and Arg-333; these read RAS and KPIPT.

Belongs to the chorismate synthase family. In terms of assembly, homotetramer. Requires FMNH2 as cofactor.

It catalyses the reaction 5-O-(1-carboxyvinyl)-3-phosphoshikimate = chorismate + phosphate. It participates in metabolic intermediate biosynthesis; chorismate biosynthesis; chorismate from D-erythrose 4-phosphate and phosphoenolpyruvate: step 7/7. In terms of biological role, catalyzes the anti-1,4-elimination of the C-3 phosphate and the C-6 proR hydrogen from 5-enolpyruvylshikimate-3-phosphate (EPSP) to yield chorismate, which is the branch point compound that serves as the starting substrate for the three terminal pathways of aromatic amino acid biosynthesis. This reaction introduces a second double bond into the aromatic ring system. This is Chorismate synthase from Carboxydothermus hydrogenoformans (strain ATCC BAA-161 / DSM 6008 / Z-2901).